An 88-amino-acid polypeptide reads, in one-letter code: Cell division topological specificity factor (88 aa).

It belongs to the MinE family.

In terms of biological role, prevents the cell division inhibition by proteins MinC and MinD at internal division sites while permitting inhibition at polar sites. This ensures cell division at the proper site by restricting the formation of a division septum at the midpoint of the long axis of the cell. In Escherichia fergusonii (strain ATCC 35469 / DSM 13698 / CCUG 18766 / IAM 14443 / JCM 21226 / LMG 7866 / NBRC 102419 / NCTC 12128 / CDC 0568-73), this protein is Cell division topological specificity factor.